Here is a 101-residue protein sequence, read N- to C-terminus: Cysteine-rich PDZ-binding protein (101 aa).

The protein belongs to the CRIPT family. As to quaternary structure, component of the minor spliceosome, which splices U12-type introns.

Its subcellular location is the cytoplasm. Its function is as follows. As a component of the minor spliceosome, involved in the splicing of U12-type introns in pre-mRNAs. The sequence is that of Cysteine-rich PDZ-binding protein (cript) from Ictalurus punctatus (Channel catfish).